We begin with the raw amino-acid sequence, 176 residues long: Ribosome rescue factor SmrB (176 aa).

The Smr domain maps to 93–168 (LDLHGYRQSE…GDAALLVLID (76 aa)).

It belongs to the SmrB family. In terms of assembly, associates with collided ribosomes, but not with correctly translating polysomes.

Functionally, acts as a ribosome collision sensor. Detects stalled/collided disomes (pairs of ribosomes where the leading ribosome is stalled and a second ribosome has collided with it) and endonucleolytically cleaves mRNA at the 5' boundary of the stalled ribosome. Stalled/collided disomes form a new interface (primarily via the 30S subunits) that binds SmrB. Cleaved mRNA becomes available for tmRNA ligation, leading to ribosomal subunit dissociation and rescue of stalled ribosomes. The polypeptide is Ribosome rescue factor SmrB (Shewanella putrefaciens (strain CN-32 / ATCC BAA-453)).